The primary structure comprises 293 residues: MTAAHDRSENQPGRPGGETTAPYGSAPRRRRVRTRHLLELKQRGEAWPMLTSYDMYTARIFDEAGIPVLLVGDSAANNVYGYDTTVPVTVEELIPLVRAVTRGARSALVVADLPFGSYEASPEQALATAVRFMKEGGAHAVKLEGGRPFARHVEALVNAGIPVMGHIGFTPQSEHTLGGYRVQGRGEQAEELAADARALQDAGAFAVVLEMVSSDSAKRVTAELTIPTVGIGAGPECDAQVLVWTDMAGMNTGRTARFVKRYADLGGTLARAAQEFADEVRGGAFPAPEHSFE.

The interval 1–29 (MTAAHDRSENQPGRPGGETTAPYGSAPRR) is disordered. Mg(2+) contacts are provided by D73 and D112. 3-methyl-2-oxobutanoate-binding positions include 73 to 74 (DS), D112, and K142. E144 serves as a coordination point for Mg(2+). The Proton acceptor role is filled by E210.

This sequence belongs to the PanB family. In terms of assembly, homodecamer; pentamer of dimers. It depends on Mg(2+) as a cofactor.

The protein localises to the cytoplasm. The catalysed reaction is 3-methyl-2-oxobutanoate + (6R)-5,10-methylene-5,6,7,8-tetrahydrofolate + H2O = 2-dehydropantoate + (6S)-5,6,7,8-tetrahydrofolate. Its pathway is cofactor biosynthesis; (R)-pantothenate biosynthesis; (R)-pantoate from 3-methyl-2-oxobutanoate: step 1/2. Catalyzes the reversible reaction in which hydroxymethyl group from 5,10-methylenetetrahydrofolate is transferred onto alpha-ketoisovalerate to form ketopantoate. The sequence is that of 3-methyl-2-oxobutanoate hydroxymethyltransferase from Saccharopolyspora erythraea (strain ATCC 11635 / DSM 40517 / JCM 4748 / NBRC 13426 / NCIMB 8594 / NRRL 2338).